Consider the following 252-residue polypeptide: uncharacterized protein (252 aa).

The protein resides in the plastid. The protein localises to the chloroplast. This is an uncharacterized protein from Guillardia theta (Cryptophyte).